The following is a 22-amino-acid chain: ASNLATGGAGPLIXKGTGGRSS.

The disordered stretch occupies residues 1–22 (ASNLATGGAGPLIXKGTGGRSS).

This sequence belongs to the complex I NDUFA9 subunit family. Complex I is composed of about 45 different subunits. FAD serves as cofactor.

The protein localises to the mitochondrion matrix. Accessory subunit of the mitochondrial membrane respiratory chain NADH dehydrogenase (Complex I), that is believed not to be involved in catalysis. Complex I functions in the transfer of electrons from NADH to the respiratory chain. The immediate electron acceptor for the enzyme is believed to be ubiquinone. The polypeptide is NADH dehydrogenase [ubiquinone] 1 alpha subcomplex subunit 9 (Solanum tuberosum (Potato)).